The primary structure comprises 274 residues: Thiamine kinase (274 aa).

It belongs to the thiamine kinase family.

The catalysed reaction is thiamine + ATP = thiamine phosphate + ADP + H(+). The protein operates within cofactor biosynthesis; thiamine diphosphate biosynthesis; thiamine phosphate from thiamine: step 1/1. Functionally, catalyzes the ATP-dependent phosphorylation of thiamine to thiamine phosphate. Is involved in thiamine salvage. In Shigella flexneri serotype 5b (strain 8401), this protein is Thiamine kinase.